The following is a 311-amino-acid chain: Mediator of RNA polymerase II transcription subunit 27 (311 aa).

This sequence belongs to the Mediator complex subunit 27 family. Component of the Mediator complex.

Its subcellular location is the nucleus. Its function is as follows. Component of the Mediator complex, a coactivator involved in the regulated transcription of nearly all RNA polymerase II-dependent genes. Mediator functions as a bridge to convey information from gene-specific regulatory proteins to the basal RNA polymerase II transcription machinery. Mediator is recruited to promoters by direct interactions with regulatory proteins and serves as a scaffold for the assembly of a functional preinitiation complex with RNA polymerase II and the general transcription factors. Required for the development of dopaminergic amacrine cells in the retina. May also negatively regulate the development of rod photoreceptor cells. The sequence is that of Mediator of RNA polymerase II transcription subunit 27 (med27) from Danio rerio (Zebrafish).